The chain runs to 214 residues: ER lumen protein-retaining receptor (214 aa).

Over 1 to 4 the chain is Lumenal; the sequence is MVFN. Residues 5–23 form a helical membrane-spanning segment; that stretch reads LFRISADLVHLLSIYFLLT. At 24–37 the chain is on the cytoplasmic side; the sequence is KIISHKNCIGISLR. Residues 38 to 55 form a helical membrane-spanning segment; sequence SQILFFIVWVTRYLDIFY. At 56-63 the chain is on the lumenal side; that stretch reads NFYSLYNT. The chain crosses the membrane as a helical span at residues 64–82; sequence ILKIVYLTTSAYTIYLISK. The Cytoplasmic portion of the chain corresponds to 83-98; that stretch reads RFRATYDKIHDTLNVW. The chain crosses the membrane as a helical span at residues 99-112; the sequence is YLIVPCIVLAFIFT. The Lumenal segment spans residues 113 to 119; sequence EDYSITE. A helical transmembrane segment spans residues 120–139; it reads ICWTFSIFLEAVAILPQILL. Over 140 to 151 the chain is Cytoplasmic; the sequence is LRSTGEVENLNS. Residues 152–170 form a helical membrane-spanning segment; the sequence is QYIFCLGLYRALYIINWIY. The Lumenal segment spans residues 171 to 181; the sequence is RYATEQSYWSP. The helical transmembrane segment at 182 to 202 threads the bilayer; that stretch reads LTWICGSIQTLLYVEYFYYYI. The Cytoplasmic portion of the chain corresponds to 203 to 214; that stretch reads KSRVEGTKFVLP.

It belongs to the ERD2 family.

It localises to the endoplasmic reticulum membrane. Functionally, required for the retention of luminal endoplasmic reticulum proteins. Determines the specificity of the luminal ER protein retention system. Also required for normal vesicular traffic through the Golgi. The polypeptide is ER lumen protein-retaining receptor (Entamoeba histolytica (strain ATCC 30459 / HM-1:IMSS / ABRM)).